The following is a 106-amino-acid chain: Iron-sulfur cluster assembly protein CyaY (106 aa).

It belongs to the frataxin family.

Functionally, involved in iron-sulfur (Fe-S) cluster assembly. May act as a regulator of Fe-S biogenesis. This chain is Iron-sulfur cluster assembly protein CyaY, found in Cronobacter sakazakii (strain ATCC BAA-894) (Enterobacter sakazakii).